Consider the following 139-residue polypeptide: Putative pre-16S rRNA nuclease (139 aa).

It belongs to the YqgF nuclease family.

The protein resides in the cytoplasm. Its function is as follows. Could be a nuclease involved in processing of the 5'-end of pre-16S rRNA. In Legionella pneumophila subsp. pneumophila (strain Philadelphia 1 / ATCC 33152 / DSM 7513), this protein is Putative pre-16S rRNA nuclease.